The sequence spans 313 residues: UbiA prenyltransferase claS (313 aa).

The next 2 helical transmembrane spans lie at 30–52 and 57–79; these read FAGT…RALL and TFGT…GCIW. The short motif at 81-88 is the NDxxDxxxD element; the sequence is DILDQDFD. Residues Asp84 and Asp88 each coordinate Mg(2+). 3 helical membrane passes run 99–121, 131–148, and 155–177; these read IASG…FILM, AWMI…IYPL, and WPQA…YTTG. Asp205 and Asp209 together coordinate Mg(2+). A DxxxD motif is present at residues 205–209; sequence DKKDD. Residues 205–209 carry the YxxxK motif; that stretch reads DKKDD. The next 3 helical transmembrane spans lie at 227–247, 250–270, and 293–313; these read PVLS…GILN, ELPY…TQLW, and AIVW…GAIM.

This sequence belongs to the UbiA prenyltransferase family. Requires Mg(2+) as cofactor.

The protein resides in the membrane. The enzyme catalyses hydroquinone + (2E)-geranyl diphosphate = (2E)-geranylhydroquinone + diphosphate. Its pathway is secondary metabolite biosynthesis; terpenoid biosynthesis. Prenyltransferase; part of the gene cluster that mediates the biosynthesis of clavilactone A, a meroterpenoid that features a unique benzo-fused ten-membered carbocyclic ring unit with an alpha,beta-epoxy-gamma-lactone moiety, forming an intriguing 10/5/3 tricyclic nested skeleton. ClaR, ClaS and ClaT are sufficient to produce clavilactone A. Within the pathway, claS acts as an atypical UbiA prenyltransferase that transfers geranyl pyrophosphate (GPP) to hydroquinone (HYQ) instead of p-hydroxybenzoic acid (PHB), producing the first intermediate geranylhydroquinone. The cytochrome P450 monooxygenase claR then catalyzes the diradical coupling reaction between the intramolecular hydroquinone and allyl moieties to form the benzo-fused ten-membered carbocyclic ring unit of wigantol. Finally the cytochrome P450 monooxygenase claT exquisitely and stereoselectively assembles the alpha,beta-epoxy-gamma-lactone moiety, producing clavilactone A via arnebinol A. This chain is UbiA prenyltransferase claS, found in Ampulloclitocybe clavipes (Club foot).